We begin with the raw amino-acid sequence, 104 residues long: Glutaredoxin 1 (104 aa).

The region spanning 1 to 96 is the Glutaredoxin domain; sequence MNKSILHTII…KLLETQPKNK (96 aa). Cys17 and Cys20 are joined by a disulfide.

Belongs to the glutaredoxin family. In terms of assembly, monomer.

The protein localises to the cytoplasm. Its function is as follows. Has a glutathione-disulfide oxidoreductase activity in the presence of NADPH and glutathione reductase. Reduces low molecular weight disulfides and proteins. In Rickettsia typhi (strain ATCC VR-144 / Wilmington), this protein is Glutaredoxin 1 (grxC1).